Reading from the N-terminus, the 464-residue chain is ATP synthase subunit beta (464 aa).

An ATP-binding site is contributed by 152–159 (GGAGVGKT).

It belongs to the ATPase alpha/beta chains family. F-type ATPases have 2 components, CF(1) - the catalytic core - and CF(0) - the membrane proton channel. CF(1) has five subunits: alpha(3), beta(3), gamma(1), delta(1), epsilon(1). CF(0) has three main subunits: a(1), b(2) and c(9-12). The alpha and beta chains form an alternating ring which encloses part of the gamma chain. CF(1) is attached to CF(0) by a central stalk formed by the gamma and epsilon chains, while a peripheral stalk is formed by the delta and b chains.

It is found in the cell inner membrane. It catalyses the reaction ATP + H2O + 4 H(+)(in) = ADP + phosphate + 5 H(+)(out). Functionally, produces ATP from ADP in the presence of a proton gradient across the membrane. The catalytic sites are hosted primarily by the beta subunits. The chain is ATP synthase subunit beta from Aliarcobacter butzleri (strain RM4018) (Arcobacter butzleri).